A 290-amino-acid chain; its full sequence is 33 kDa chaperonin (290 aa).

2 disulfide bridges follow: C235-C237 and C268-C271.

The protein belongs to the HSP33 family. Under oxidizing conditions two disulfide bonds are formed involving the reactive cysteines. Under reducing conditions zinc is bound to the reactive cysteines and the protein is inactive.

It is found in the cytoplasm. Redox regulated molecular chaperone. Protects both thermally unfolding and oxidatively damaged proteins from irreversible aggregation. Plays an important role in the bacterial defense system toward oxidative stress. This is 33 kDa chaperonin from Streptococcus pneumoniae (strain P1031).